The sequence spans 158 residues: Transcription elongation factor GreA (158 aa).

The protein belongs to the GreA/GreB family.

Necessary for efficient RNA polymerase transcription elongation past template-encoded arresting sites. The arresting sites in DNA have the property of trapping a certain fraction of elongating RNA polymerases that pass through, resulting in locked ternary complexes. Cleavage of the nascent transcript by cleavage factors such as GreA or GreB allows the resumption of elongation from the new 3'terminus. GreA releases sequences of 2 to 3 nucleotides. This Rhizobium johnstonii (strain DSM 114642 / LMG 32736 / 3841) (Rhizobium leguminosarum bv. viciae) protein is Transcription elongation factor GreA.